The primary structure comprises 193 residues: Imidazoleglycerol-phosphate dehydratase (193 aa).

This sequence belongs to the imidazoleglycerol-phosphate dehydratase family.

Its subcellular location is the cytoplasm. It carries out the reaction D-erythro-1-(imidazol-4-yl)glycerol 3-phosphate = 3-(imidazol-4-yl)-2-oxopropyl phosphate + H2O. It participates in amino-acid biosynthesis; L-histidine biosynthesis; L-histidine from 5-phospho-alpha-D-ribose 1-diphosphate: step 6/9. The polypeptide is Imidazoleglycerol-phosphate dehydratase (Sulfolobus acidocaldarius (strain ATCC 33909 / DSM 639 / JCM 8929 / NBRC 15157 / NCIMB 11770)).